Reading from the N-terminus, the 100-residue chain is Large ribosomal subunit protein eL21 (100 aa).

The protein belongs to the eukaryotic ribosomal protein eL21 family.

This Pyrobaculum aerophilum (strain ATCC 51768 / DSM 7523 / JCM 9630 / CIP 104966 / NBRC 100827 / IM2) protein is Large ribosomal subunit protein eL21.